A 143-amino-acid polypeptide reads, in one-letter code: Large ribosomal subunit protein uL15 (143 aa).

Residues 1-59 (MELNGIKPSLGAKHAKRRVGRGIGSGLGKTAGRGHKGQKSRAGGYHKVGFEGGQMPMQR) form a disordered region. Residues 21–31 (RGIGSGLGKTA) show a composition bias toward gly residues.

This sequence belongs to the universal ribosomal protein uL15 family. Part of the 50S ribosomal subunit.

In terms of biological role, binds to the 23S rRNA. The sequence is that of Large ribosomal subunit protein uL15 from Polaromonas sp. (strain JS666 / ATCC BAA-500).